The primary structure comprises 129 residues: Small ribosomal subunit protein uS11 (129 aa).

Belongs to the universal ribosomal protein uS11 family. As to quaternary structure, part of the 30S ribosomal subunit. Interacts with proteins S7 and S18. Binds to IF-3.

Located on the platform of the 30S subunit, it bridges several disparate RNA helices of the 16S rRNA. Forms part of the Shine-Dalgarno cleft in the 70S ribosome. In Azobacteroides pseudotrichonymphae genomovar. CFP2, this protein is Small ribosomal subunit protein uS11.